The following is a 477-amino-acid chain: Inner membrane transporter YgjI (477 aa).

Topologically, residues 1–8 are periplasmic; it reads MSDTKRNT. A helical membrane pass occupies residues 9 to 29; it reads IGKFGLLSLTFAAVYSFNNVI. Topologically, residues 30-41 are cytoplasmic; it reads NNNIELGLASAP. Residues 42–62 form a helical membrane-spanning segment; that stretch reads MFFLATIFYFIPFCLIIAEFV. Residues 63 to 83 lie on the Periplasmic side of the membrane; it reads SLNKNSEAGVYAWVKSSLGGR. Residues 84-104 form a helical membrane-spanning segment; that stretch reads WAFITAYTYWFVNLFFFTSLL. Over 105–120 the chain is Cytoplasmic; it reads PRVIAYASYAFLGYEY. A helical membrane pass occupies residues 121 to 141; sequence IMTPVATTIISMVLFAFSTWV. Topologically, residues 142–158 are periplasmic; sequence STNGAKMLGPITSVTST. Residues 159–179 traverse the membrane as a helical segment; the sequence is LMLLLTLSYILLAGTALVGGV. At 180–196 the chain is on the cytoplasmic side; the sequence is QPADAITVDAMIPNFNW. A helical transmembrane segment spans residues 197–217; the sequence is AFLGVTTWIFMAAGGAESVAV. The Periplasmic segment spans residues 218–232; the sequence is YVNDVKGGSKSFVKV. Residues 233-253 form a helical membrane-spanning segment; sequence IILAGIFIGVLYSVSSVLINV. The Cytoplasmic segment spans residues 254–263; the sequence is FVSSKELKFT. Residues 264-284 traverse the membrane as a helical segment; sequence GGSVQVFHGMAAYFGLPEALM. At 285 to 286 the chain is on the periplasmic side; the sequence is NR. Residues 287 to 307 traverse the membrane as a helical segment; it reads FVGLVSFTAMFGSLLMWTATP. Residues 308–335 are Cytoplasmic-facing; the sequence is VKIFFSEIPEGIFGKKTVELNENGVPAR. A helical transmembrane segment spans residues 336–356; that stretch reads AAWIQFLIVIPLMIIPMLGSN. The Periplasmic portion of the chain corresponds to 357–364; the sequence is TVQDLMNT. Residues 365–385 traverse the membrane as a helical segment; that stretch reads IINMTAAASMLPPLFIMLAYL. Residues 386-405 are Cytoplasmic-facing; it reads NLRAKLDHLPRDFRMGSRRT. The helical transmembrane segment at 406–426 threads the bilayer; sequence GIIVVSMLIAIFAVGFVASTF. Residues 427-431 are Periplasmic-facing; the sequence is PTGAN. Residues 432–452 form a helical membrane-spanning segment; that stretch reads ILTIIFYNVGGIVIFLGFAWW. Topologically, residues 453–477 are cytoplasmic; that stretch reads KYSKYIKGLTAEERHIEATPASNVD.

It belongs to the amino acid-polyamine-organocation (APC) superfamily.

Its subcellular location is the cell inner membrane. This is Inner membrane transporter YgjI (ygjI) from Escherichia coli (strain K12).